The chain runs to 362 residues: Endolytic peptidoglycan transglycosylase RlpA (362 aa).

The N-terminal stretch at 1–17 (MRKQWLGICIAAGMLAA) is a signal peptide. Cys18 carries N-palmitoyl cysteine lipidation. A lipid anchor (S-diacylglycerol cysteine) is attached at Cys18. Residues 198–276 (PDLSGGAGTS…PSTTPATSPA (79 aa)) are disordered. The span at 262-276 (PVVTAPSTTPATSPA) shows a compositional bias: low complexity. The 77-residue stretch at 285–361 (QSASGNFMVQ…AQLQSFITTA (77 aa)) folds into the SPOR domain.

This sequence belongs to the RlpA family.

It is found in the cell membrane. Its function is as follows. Lytic transglycosylase with a strong preference for naked glycan strands that lack stem peptides. This chain is Endolytic peptidoglycan transglycosylase RlpA, found in Escherichia coli O157:H7.